Here is a 332-residue protein sequence, read N- to C-terminus: Cinnamoyl-CoA reductase 2 (332 aa).

Residues 12–18 (GAGGYIA), Arg37, Lys43, 63–64 (DL), 83–85 (TAS), Tyr156, Lys160, 183–186 (PVLV), and Ser198 contribute to the NADP(+) site. Cysteines 149 and 157 form a disulfide. Catalysis depends on Lys160, which acts as the Proton donor.

Belongs to the NAD(P)-dependent epimerase/dehydratase family. Dihydroflavonol-4-reductase subfamily. In terms of tissue distribution, expressed at low levels in leaves, stems and flowers.

It catalyses the reaction (E)-cinnamaldehyde + NADP(+) + CoA = (E)-cinnamoyl-CoA + NADPH + H(+). Its pathway is aromatic compound metabolism; phenylpropanoid biosynthesis. Functionally, cinnamoyl-CoA reductase probably involved in the formation of phenolic compounds associated with the hypersensitive response. Seems not to be involved in lignin biosynthesis. This is Cinnamoyl-CoA reductase 2 (CCR2) from Arabidopsis thaliana (Mouse-ear cress).